Consider the following 220-residue polypeptide: Octanoyltransferase (220 aa).

The BPL/LPL catalytic domain maps to 31–211; it reads GTAADHLLLL…HFARIFDFEM (181 aa). Residues 76 to 83, 143 to 145, and 156 to 158 contribute to the substrate site; these read RGGDVTYH, AIG, and GFA. Cys-174 (acyl-thioester intermediate) is an active-site residue.

Belongs to the LipB family.

The protein resides in the cytoplasm. It carries out the reaction octanoyl-[ACP] + L-lysyl-[protein] = N(6)-octanoyl-L-lysyl-[protein] + holo-[ACP] + H(+). It functions in the pathway protein modification; protein lipoylation via endogenous pathway; protein N(6)-(lipoyl)lysine from octanoyl-[acyl-carrier-protein]: step 1/2. Catalyzes the transfer of endogenously produced octanoic acid from octanoyl-acyl-carrier-protein onto the lipoyl domains of lipoate-dependent enzymes. Lipoyl-ACP can also act as a substrate although octanoyl-ACP is likely to be the physiological substrate. In Solibacter usitatus (strain Ellin6076), this protein is Octanoyltransferase.